A 562-amino-acid chain; its full sequence is Terpene synthase 2 (562 aa).

Mg(2+)-binding residues include aspartate 315, aspartate 319, aspartate 459, and glutamate 467. Positions 315–319 match the DDXXD motif motif; sequence DDEYD.

Belongs to the terpene synthase family. Tpsa subfamily. The cofactor is Mg(2+). Mn(2+) is required as a cofactor. Expressed at low levels in stems, leaves, roots and fruits.

It carries out the reaction (2E,6E)-farnesyl diphosphate = delta-cadinene + diphosphate. The catalysed reaction is (2E,6E)-farnesyl diphosphate = alpha-cadinene + diphosphate. The enzyme catalyses (2E,6E)-farnesyl diphosphate + H2O = (-)-delta-cadinol + diphosphate. Its pathway is secondary metabolite biosynthesis; terpenoid biosynthesis. Functionally, sesquiterpene synthase involved in the biosynthesis of volatile compounds that contribute to the characteristic flavors of black pepper. Mediates the conversion of (2E,6E)-farnesyl diphosphate (FPP) into alpha-cadinene, delta-cadinene and delta-cadinol. The protein is Terpene synthase 2 of Piper nigrum (Black pepper).